The sequence spans 353 residues: C-C chemokine receptor type 8 (353 aa).

At 1–33 (MDYTMEPNVTMTDYYPDFFTAPCDAEFLLRGSM) the chain is on the extracellular side. The N-linked (GlcNAc...) asparagine glycan is linked to asparagine 8. A helical transmembrane segment spans residues 34 to 61 (LYLAILYCVLFVLGLLGNSLVILVLVGC). Residues 62 to 71 (KKLRSITDIY) lie on the Cytoplasmic side of the membrane. Residues 72–91 (LLNLAASDLLFVLSIPFQTH) traverse the membrane as a helical segment. Residues 92 to 105 (NLLDQWVFGTAMCK) are Extracellular-facing. Cysteines 104 and 181 form a disulfide. A helical transmembrane segment spans residues 106–127 (VVSGLYYIGFFSSMFFITLMSV). At 128–144 (DRYLAIVHAVYAIKVRT) the chain is on the cytoplasmic side. A helical transmembrane segment spans residues 145 to 169 (ASVGTALSLTVWLAAVTATIPLMVF). The Extracellular segment spans residues 170 to 200 (YQVASEDGMLQCFQFYEEQSLRWKLFTHFEI). A helical membrane pass occupies residues 201–220 (NALGLLLPFAILLFCYVRIL). Residues 221-236 (QQLRGCLNHNRTRAIK) lie on the Cytoplasmic side of the membrane. A helical membrane pass occupies residues 237-261 (LVLTVVIVSLLFWVPFNVALFLTSL). The Extracellular portion of the chain corresponds to 262–278 (HDLHILDGCATRQRLAL). The chain crosses the membrane as a helical span at residues 279-302 (AIHVTEVISFTHCCVNPVIYAFIG). Residues 303-353 (EKFKKHLMDVFQKSCSHIFLYLGRQMPVGALERQLSSNQRSSHSSTLDDIL) lie on the Cytoplasmic side of the membrane.

This sequence belongs to the G-protein coupled receptor 1 family. In terms of tissue distribution, expressed in thymus.

Its subcellular location is the cell membrane. Receptor for the CCL1/SCY1/TCA-3 chemokine. The protein is C-C chemokine receptor type 8 (Ccr8) of Mus musculus (Mouse).